The following is a 1259-amino-acid chain: MEAKKDSARRLRSIDRTRYAEHEDLSDVEDMVSIRGFSLEQKVSCNAYRGNFVRYMEGKDFTYEYVQREALQTPLLFSTKEGLGIKMPEQDFTVRDVKLLVGSRRVVDVMDVNTQKSIDMSMSQFVRYYETPEMEREKLYNVISLEFSHTKLERVVKRPTVVDAVDWVDNMWPRHLKEQQKESTNVIAEMKYPKVKKYCLMSVKGCYTDFHIDFGGTSVWYHVFRGGKVFWLIPPTGHNLQLYEEWLLSGKQTDIFLGDRSEGCQRIELKQGQTFFIPSGWIHAVYTPADSLVFGGNILHSFNIPMQLRVFEIEDRTRVNAKFRYPFYYEMCWYVLERYVCTLTKRSHLIKEYQRESMITDRKPSLDSHSSDSWLEMEEESCDIHIKEEKGNLVEKPSKQSGDESSTTNSTHSNGKDAAEKKQKATLMQQLKRTLSNDSDESSKSIVHSDFPKTPTGSPATDMPCKLTHLTEFELKGLKALVEKLESLPENKKCVPEGIEDPQALLEDMKTVLKEHADDDNNLAISGVPVVMWPKKPSKNRAVGRPKGKIASSPAVKLSANRTSAGARRRRTRCRKCEACLRTECGECHFCKDMKKFGGPGRMKQSCIMRQCIAPVLPHTAVCLVCGEAGKEDCVEGQEAKFNVMLMECSICNEIIHPGCLKTKESDGVVNDELPNCWECPKCNHAGKTGKVYKQKRGPGFKYASNLPGSLLKEQKVNRDNKELTEIVKKKVEREETPKQIPEEQPKKKPTEGIIKKKPEDGHVRKKRKFEKPPDPSVRKRLKLVKEEKLLRKKRRSWKTPDERAMMAKTLRRIKQEPDDDLTEAAPKAKESDQSRSSSPTAGPSTEGSEPKEKKKIRRKRRVSNKELSKELSKELNQEIQKTESSLASENHHPIKSEPESDNEESKKCISTNGERMHNFSKGLNGTPKELRHELFPSLKTTPRANNRPPPSLSPPKCMQMERHVIRPPPISPPPDSLPLANGAAHVMQREVWMAIFSYLSHRDLCICMRICRTWNRWCCDKRLWTQIDLNRCKSITPLMLSGIIRRQPASLDLSWTNISKKQLSWLINRLPALRDLNLSGCSWIAVSALCSSCCPLLRTLNVQWVEGLKDAQMRDLLSPPTDNRPGQIDNRSKLRNITELRLAGLDITDASLRLMIRHMPLLAKLDLSYCNHVTDQSINLLTAVGTSTRDTLLEMNLSDCNNVTDQCLTFFKRCGNICLIDLRFCKQVSKESCEQFIAEMSVIVQFGQTEEKLLQKVS.

A JmjC domain is found at 147–315; it reads FSHTKLERVV…MQLRVFEIED (169 aa). Thr-208 provides a ligand contact to substrate. Residues His-211 and Asp-213 each coordinate Fe cation. Residue Lys-228 participates in substrate binding. His-283 serves as a coordination point for Fe cation. Over residues 388 to 402 the composition is skewed to basic and acidic residues; the sequence is EEKGNLVEKPSKQSG. 2 disordered regions span residues 388-463 and 536-562; these read EEKG…ATDM and KPSKNRAVGRPKGKIASSPAVKLSANR. Residues 403 to 413 show a composition bias toward polar residues; it reads DESSTTNSTHS. Positions 414–423 are enriched in basic and acidic residues; it reads NGKDAAEKKQ. Residues 426–437 show a composition bias toward polar residues; it reads TLMQQLKRTLSN. The span at 536 to 548 shows a compositional bias: basic residues; sequence KPSKNRAVGRPKG. The CXXC-type zinc-finger motif lies at 567 to 613; it reads ARRRRTRCRKCEACLRTECGECHFCKDMKKFGGPGRMKQSCIMRQCI. Zn(2+) contacts are provided by Cys-574, Cys-577, Cys-580, Cys-585, Cys-588, Cys-591, Cys-607, Cys-612, Cys-623, Cys-626, Cys-649, Cys-652, His-657, Cys-660, Cys-680, and Cys-683. The PHD-type zinc-finger motif lies at 620–686; sequence TAVCLVCGEA…CWECPKCNHA (67 aa). 2 stretches are compositionally biased toward basic and acidic residues: residues 729 to 763 and 771 to 790; these read KKKVEREETPKQIPEEQPKKKPTEGIIKKKPEDGH and EKPPDPSVRKRLKLVKEEKL. The interval 729-958 is disordered; it reads KKKVEREETP…PPPSLSPPKC (230 aa). Positions 835–848 are enriched in polar residues; the sequence is SRSSSPTAGPSTEG. A compositionally biased stretch (basic residues) spans 854–863; it reads KKKIRRKRRV. Positions 864 to 877 are enriched in basic and acidic residues; sequence SNKELSKELSKELN. Residues 864-891 are a coiled coil; it reads SNKELSKELSKELNQEIQKTESSLASEN. The segment covering 878–889 has biased composition (polar residues); the sequence is QEIQKTESSLAS. The segment covering 890 to 908 has biased composition (basic and acidic residues); that stretch reads ENHHPIKSEPESDNEESKK. The F-box domain maps to 985–1030; that stretch reads AHVMQREVWMAIFSYLSHRDLCICMRICRTWNRWCCDKRLWTQIDL. LRR repeat units follow at residues 1056 to 1081, 1082 to 1105, 1145 to 1170, 1171 to 1200, and 1201 to 1225; these read WTNISKKQLSWLINRLPALRDLNLSG, CSWIAVSALCSSCCPLLRTLNVQW, GLDITDASLRLMIRHMPLLAKLDLSY, CNHVTDQSINLLTAVGTSTRDTLLEMNLSD, and CNNVTDQCLTFFKRCGNICLIDLRF.

Belongs to the JHDM1 histone demethylase family. It depends on Fe(2+) as a cofactor.

Its subcellular location is the nucleus. It localises to the nucleolus. It is found in the chromosome. It carries out the reaction N(6),N(6)-dimethyl-L-lysyl(36)-[histone H3] + 2 2-oxoglutarate + 2 O2 = L-lysyl(36)-[histone H3] + 2 formaldehyde + 2 succinate + 2 CO2. With respect to regulation, histone demethylase activity is inhibited by fumarate. In terms of biological role, histone demethylase that demethylates 'Lys-4' and 'Lys-36' of histone H3, thereby playing a central role in histone code. Preferentially demethylates trimethylated H3 'Lys-4' and dimethylated H3 'Lys-36' residue while it has weak or no activity for mono- and tri-methylated H3 'Lys-36'. Preferentially binds the transcribed region of ribosomal RNA and represses the transcription of ribosomal RNA genes which inhibits cell growth and proliferation. The polypeptide is Lysine-specific demethylase 2B (kdm2b) (Xenopus laevis (African clawed frog)).